We begin with the raw amino-acid sequence, 208 residues long: Uracil phosphoribosyltransferase (208 aa).

Residues Arg-78, Arg-103, and 130–138 each bind 5-phospho-alpha-D-ribose 1-diphosphate; that span reads DPMLATGGT. Uracil-binding positions include Ile-193 and 198-200; that span reads GDA. Asp-199 is a binding site for 5-phospho-alpha-D-ribose 1-diphosphate.

Belongs to the UPRTase family. Mg(2+) is required as a cofactor.

It catalyses the reaction UMP + diphosphate = 5-phospho-alpha-D-ribose 1-diphosphate + uracil. The protein operates within pyrimidine metabolism; UMP biosynthesis via salvage pathway; UMP from uracil: step 1/1. With respect to regulation, allosterically activated by GTP. In terms of biological role, catalyzes the conversion of uracil and 5-phospho-alpha-D-ribose 1-diphosphate (PRPP) to UMP and diphosphate. This chain is Uracil phosphoribosyltransferase, found in Desulforapulum autotrophicum (strain ATCC 43914 / DSM 3382 / VKM B-1955 / HRM2) (Desulfobacterium autotrophicum).